Reading from the N-terminus, the 776-residue chain is MSVLGFDIGNLNCYIGVARQGGIEVITNDYSLHATPACVSFGPKDRSMGVAARQAVTTNIKNTVINFKHLIGRKFSDPVAQRFIPFIPCKVVKLPNDDIGVQVSYLGEPHTFTPEQVLAALLTKLRTIVESQLSDVKKVSDCVLAVPSYFTDVQRRAVLSAIQYAGLNSLRIVNETTAIALAYGIYKQDLPEEDAKSRNVVFLDIGHSSTQASLVAFNRGKLQMVNTSYDLESGGIWFDALIREHFRKEFKTKYGIDAATSPRPWLRLLDECERVKKQMSANQTPIPLNIECFMEDKDVTGKMQRQEFEDLAAPIFNRIKQVLINLFADGVSIKPEEIDEIEIVGGSSRIPMIREIVKDLFGKEPKTTMNQDEAVARGAAMQCAILSPTFRVREFAIKDTQPYRIRLSWNSTGENGGENDVFSPRDEVPFSKLVSLLRSGPFNVEAHYAQPNVVPHNQVHIGSWKVNGARPGADGGNQKVKVKVRVNPDGIFTIASATMYEPRIVEEVPAEAMEVDGDAKTEAPAEPLEPVKKTKLVPVDLEVIESIPVSYDVQKFHNLELQMQESDAREKAKADAKNSLEEYVYEMRDKVSDQYAEFITPAAADEFRSVLTSTEDWLYDEGEDAERDVYEKRLSELKAVGTPVVERYRESETRKPAFDSFDQSIMRVRKAYEDYANGGPTYAHLDSKEMEKVINAIEDKKKWLDEARHKQETRSKTDAPVVFTEEILQNKNVFENVVNPILNKKKPAAPAPPKKEEPQPAAGDQPQSQPGEMDVD.

A disordered region spans residues I741–D776.

The protein belongs to the heat shock protein 70 family.

In Caenorhabditis elegans, this protein is Heat shock protein 110.